We begin with the raw amino-acid sequence, 363 residues long: Chorismate synthase (363 aa).

Positions 47 and 53 each coordinate NADP(+). Residues 124–126 (RSS), Gly-286, 301–305 (KPTAT), and Arg-327 contribute to the FMN site.

Belongs to the chorismate synthase family. As to quaternary structure, homotetramer. The cofactor is FMNH2.

It carries out the reaction 5-O-(1-carboxyvinyl)-3-phosphoshikimate = chorismate + phosphate. The protein operates within metabolic intermediate biosynthesis; chorismate biosynthesis; chorismate from D-erythrose 4-phosphate and phosphoenolpyruvate: step 7/7. Functionally, catalyzes the anti-1,4-elimination of the C-3 phosphate and the C-6 proR hydrogen from 5-enolpyruvylshikimate-3-phosphate (EPSP) to yield chorismate, which is the branch point compound that serves as the starting substrate for the three terminal pathways of aromatic amino acid biosynthesis. This reaction introduces a second double bond into the aromatic ring system. The polypeptide is Chorismate synthase (Thermosynechococcus vestitus (strain NIES-2133 / IAM M-273 / BP-1)).